We begin with the raw amino-acid sequence, 436 residues long: Hydroxycinnamoyltransferase (436 aa).

Catalysis depends on proton acceptor residues histidine 154 and aspartate 383.

This sequence belongs to the plant acyltransferase family. Mostly expressed in stems, and, to a lower extent, in bulbs.

Its pathway is phenylpropanoid metabolism. Hydroxycinnamoyl transferase that catalyzes the transfer of an acyl from p-coumaryol-CoA to various acyl acceptors. Can use feruloyl-CoA and caffeoyl-CoA as acyl donors. This is Hydroxycinnamoyltransferase from Narcissus pseudonarcissus (Daffodil).